The chain runs to 548 residues: Organic cation transporter protein (548 aa).

Topologically, residues 1 to 22 (MGYDDVITHLGEFGPYQKRIYY) are cytoplasmic. A helical membrane pass occupies residues 23–43 (LLCLPAIVCAFHKLAGVFLLA). Residues 44-127 (KPDFRCALPY…TEWNLVCSRS (84 aa)) lie on the Extracellular side of the membrane. N-linked (GlcNAc...) asparagine glycosylation is found at asparagine 55, asparagine 67, asparagine 89, and asparagine 97. The chain crosses the membrane as a helical span at residues 128-148 (LLSATSDSLFMLGVLLGSLIF). At 149–158 (GQMSDKLGRK) the chain is on the cytoplasmic side. The chain crosses the membrane as a helical span at residues 159-179 (PTFFASLVLQLIFGVLAAVAP). The Extracellular portion of the chain corresponds to 180–189 (EYFSYTISRM). A helical membrane pass occupies residues 190–210 (IVGATTSGVFLVAYVIALEMV). The Cytoplasmic portion of the chain corresponds to 211–219 (GSSYRLFAG). A helical membrane pass occupies residues 220-240 (VAMQMFFSVGFMLTAGFAYFI). Topologically, residues 241-244 (HDWR) are extracellular. The chain crosses the membrane as a helical span at residues 245–265 (WLQIAITLPGLLFLCYYWIIP). Residues 266 to 337 (ESARWLLMKG…LLRYPNLRRK (72 aa)) are Cytoplasmic-facing. The helical transmembrane segment at 338–358 (TLLIFFDWFVNSGVYYGLSWN) threads the bilayer. Over 359–366 (TNNLGGNQ) the chain is Extracellular. A helical transmembrane segment spans residues 367–387 (LVNFMISGAVEIPGYTLLLFT). Residues 388-395 (LNRWGRRS) are Cytoplasmic-facing. Residues 396 to 416 (ILCGTMMVAGISLLATIFVPS) form a helical membrane-spanning segment. The Extracellular segment spans residues 417 to 419 (DMN). A helical membrane pass occupies residues 420 to 440 (WLIVACAMIGKLAITSSYGTI). The Cytoplasmic portion of the chain corresponds to 441–453 (YIFSAEQFPTVVR). A helical membrane pass occupies residues 454 to 474 (NVGLGASSMVARVGGILAPYL). Topologically, residues 475–482 (KLLGEIWR) are extracellular. The chain crosses the membrane as a helical span at residues 483 to 503 (PLPLIICGALSLTAGLLSLLL). Residues 504-548 (PETLNKPMPETIEDGENFGKKPAPQETAEEGGTQELSGMLNGKSG) are Cytoplasmic-facing. Residues 512-548 (PETIEDGENFGKKPAPQETAEEGGTQELSGMLNGKSG) form a disordered region.

It belongs to the major facilitator (TC 2.A.1) superfamily. Organic cation transporter (TC 2.A.1.19) family. In terms of tissue distribution, expressed in embryos and adults at low level. Expressed at higher level in third instar larvae.

It is found in the membrane. In terms of biological role, probably transports organic cations. This Drosophila melanogaster (Fruit fly) protein is Organic cation transporter protein (Orct).